A 118-amino-acid polypeptide reads, in one-letter code: Large ribosomal subunit protein bL21c (118 aa).

It belongs to the bacterial ribosomal protein bL21 family. Part of the 50S ribosomal subunit.

The protein resides in the plastid. It localises to the chloroplast. Its function is as follows. This protein binds to 23S rRNA. This Anthoceros angustus (Hornwort) protein is Large ribosomal subunit protein bL21c.